Consider the following 107-residue polypeptide: Homeobox protein HD-3 (107 aa).

The homeobox DNA-binding region spans 6 to 65 (SKAPRTRMTAGQTRVLMSFFKDNPFPSTTAREKLSKVLGVGPRTVQIWFQNQRQKARGQA).

The protein resides in the nucleus. In Encephalitozoon cuniculi (strain GB-M1) (Microsporidian parasite), this protein is Homeobox protein HD-3 (HD-3).